Here is a 395-residue protein sequence, read N- to C-terminus: ATP synthase subunit beta, chloroplastic (395 aa).

72–79 (GGAGVGKT) lines the ATP pocket.

Belongs to the ATPase alpha/beta chains family. As to quaternary structure, F-type ATPases have 2 components, CF(1) - the catalytic core - and CF(0) - the membrane proton channel. CF(1) has five subunits: alpha(3), beta(3), gamma(1), delta(1), epsilon(1). CF(0) has four main subunits: a(1), b(1), b'(1) and c(9-12).

It is found in the plastid. The protein localises to the chloroplast thylakoid membrane. It catalyses the reaction ATP + H2O + 4 H(+)(in) = ADP + phosphate + 5 H(+)(out). Produces ATP from ADP in the presence of a proton gradient across the membrane. The catalytic sites are hosted primarily by the beta subunits. This Microlepia platyphylla (Plate fern) protein is ATP synthase subunit beta, chloroplastic.